The following is a 367-amino-acid chain: 2-aminoethylphosphonate--pyruvate transaminase (367 aa).

Lysine 194 is modified (N6-(pyridoxal phosphate)lysine).

The protein belongs to the class-V pyridoxal-phosphate-dependent aminotransferase family. PhnW subfamily. As to quaternary structure, homodimer. The cofactor is pyridoxal 5'-phosphate.

The catalysed reaction is (2-aminoethyl)phosphonate + pyruvate = phosphonoacetaldehyde + L-alanine. In terms of biological role, involved in phosphonate degradation. The polypeptide is 2-aminoethylphosphonate--pyruvate transaminase (Salmonella schwarzengrund (strain CVM19633)).